Here is a 325-residue protein sequence, read N- to C-terminus: Elongation factor P--(R)-beta-lysine ligase (325 aa).

76 to 78 contacts substrate; it reads SPE. ATP is bound by residues 100–102 and Asn-109; that span reads RNE. A substrate-binding site is contributed by Tyr-118. 244-245 provides a ligand contact to ATP; it reads EL. Glu-251 contacts substrate. An ATP-binding site is contributed by Gly-300.

The protein belongs to the class-II aminoacyl-tRNA synthetase family. EpmA subfamily. Homodimer.

The enzyme catalyses D-beta-lysine + L-lysyl-[protein] + ATP = N(6)-((3R)-3,6-diaminohexanoyl)-L-lysyl-[protein] + AMP + diphosphate + H(+). Functionally, with EpmB is involved in the beta-lysylation step of the post-translational modification of translation elongation factor P (EF-P) on 'Lys-34'. Catalyzes the ATP-dependent activation of (R)-beta-lysine produced by EpmB, forming a lysyl-adenylate, from which the beta-lysyl moiety is then transferred to the epsilon-amino group of EF-P 'Lys-34'. This chain is Elongation factor P--(R)-beta-lysine ligase, found in Salmonella paratyphi A (strain ATCC 9150 / SARB42).